Here is a 514-residue protein sequence, read N- to C-terminus: Maturase K (514 aa).

It belongs to the intron maturase 2 family. MatK subfamily.

The protein localises to the plastid. It is found in the chloroplast. Usually encoded in the trnK tRNA gene intron. Probably assists in splicing its own and other chloroplast group II introns. In Tsuga canadensis (Eastern hemlock), this protein is Maturase K.